Here is a 201-residue protein sequence, read N- to C-terminus: 3-isopropylmalate dehydratase small subunit (201 aa).

Belongs to the LeuD family. LeuD type 1 subfamily. In terms of assembly, heterodimer of LeuC and LeuD.

The catalysed reaction is (2R,3S)-3-isopropylmalate = (2S)-2-isopropylmalate. It functions in the pathway amino-acid biosynthesis; L-leucine biosynthesis; L-leucine from 3-methyl-2-oxobutanoate: step 2/4. In terms of biological role, catalyzes the isomerization between 2-isopropylmalate and 3-isopropylmalate, via the formation of 2-isopropylmaleate. The polypeptide is 3-isopropylmalate dehydratase small subunit (Methylorubrum extorquens (strain CM4 / NCIMB 13688) (Methylobacterium extorquens)).